The following is a 382-amino-acid chain: 8-amino-7-oxononanoate synthase (382 aa).

Substrate-binding residues include Arg21 and His131. Ser178, His206, and Thr232 together coordinate pyridoxal 5'-phosphate. Residue Lys235 is modified to N6-(pyridoxal phosphate)lysine. Thr349 provides a ligand contact to substrate.

It belongs to the class-II pyridoxal-phosphate-dependent aminotransferase family. BioF subfamily. Homodimer. Pyridoxal 5'-phosphate is required as a cofactor.

The enzyme catalyses 6-carboxyhexanoyl-[ACP] + L-alanine + H(+) = (8S)-8-amino-7-oxononanoate + holo-[ACP] + CO2. The protein operates within cofactor biosynthesis; biotin biosynthesis. In terms of biological role, catalyzes the decarboxylative condensation of pimeloyl-[acyl-carrier protein] and L-alanine to produce 8-amino-7-oxononanoate (AON), [acyl-carrier protein], and carbon dioxide. The protein is 8-amino-7-oxononanoate synthase of Serratia marcescens.